The following is a 298-amino-acid chain: Protease HtpX homolog (298 aa).

The next 2 helical transmembrane spans lie at 15-35 and 39-59; these read YVMIGFAILVLFIGAAVGYVF and AMAGIIMAAVIAAIYMAMMIA. H143 is a binding site for Zn(2+). Residue E144 is part of the active site. Residue H147 coordinates Zn(2+). Helical transmembrane passes span 158–178 and 197–217; these read IALALSSAIAMLVNIGMRSFW and IVMMIISIVLVILGPIATTIA. E226 lines the Zn(2+) pocket.

The protein belongs to the peptidase M48B family. It depends on Zn(2+) as a cofactor.

It is found in the cell membrane. The protein is Protease HtpX homolog of Pediococcus pentosaceus (strain ATCC 25745 / CCUG 21536 / LMG 10740 / 183-1w).